The sequence spans 396 residues: 1-deoxy-D-xylulose 5-phosphate reductoisomerase (396 aa).

NADPH is bound by residues T10, G11, S12, I13, G36, K37, N38, and N124. 1-deoxy-D-xylulose 5-phosphate is bound at residue K125. Position 126 (E126) interacts with NADPH. D150 is a binding site for Mn(2+). The 1-deoxy-D-xylulose 5-phosphate site is built by S151, E152, S186, and H209. Mn(2+) is bound at residue E152. G215 provides a ligand contact to NADPH. Residues S222, N227, K228, and E231 each coordinate 1-deoxy-D-xylulose 5-phosphate. E231 contributes to the Mn(2+) binding site.

This sequence belongs to the DXR family. Mg(2+) is required as a cofactor. Requires Mn(2+) as cofactor.

The catalysed reaction is 2-C-methyl-D-erythritol 4-phosphate + NADP(+) = 1-deoxy-D-xylulose 5-phosphate + NADPH + H(+). It participates in isoprenoid biosynthesis; isopentenyl diphosphate biosynthesis via DXP pathway; isopentenyl diphosphate from 1-deoxy-D-xylulose 5-phosphate: step 1/6. In terms of biological role, catalyzes the NADPH-dependent rearrangement and reduction of 1-deoxy-D-xylulose-5-phosphate (DXP) to 2-C-methyl-D-erythritol 4-phosphate (MEP). This chain is 1-deoxy-D-xylulose 5-phosphate reductoisomerase, found in Actinobacillus pleuropneumoniae serotype 3 (strain JL03).